The following is a 569-amino-acid chain: Proline--tRNA ligase (569 aa).

The protein belongs to the class-II aminoacyl-tRNA synthetase family. ProS type 1 subfamily. As to quaternary structure, homodimer.

The protein localises to the cytoplasm. It catalyses the reaction tRNA(Pro) + L-proline + ATP = L-prolyl-tRNA(Pro) + AMP + diphosphate. Its function is as follows. Catalyzes the attachment of proline to tRNA(Pro) in a two-step reaction: proline is first activated by ATP to form Pro-AMP and then transferred to the acceptor end of tRNA(Pro). As ProRS can inadvertently accommodate and process non-cognate amino acids such as alanine and cysteine, to avoid such errors it has two additional distinct editing activities against alanine. One activity is designated as 'pretransfer' editing and involves the tRNA(Pro)-independent hydrolysis of activated Ala-AMP. The other activity is designated 'posttransfer' editing and involves deacylation of mischarged Ala-tRNA(Pro). The misacylated Cys-tRNA(Pro) is not edited by ProRS. This chain is Proline--tRNA ligase, found in Campylobacter jejuni subsp. doylei (strain ATCC BAA-1458 / RM4099 / 269.97).